A 186-amino-acid polypeptide reads, in one-letter code: Nicotinamidase/pyrazinamidase (186 aa).

Asp-8 functions as the Proton acceptor in the catalytic mechanism. Residues Asp-49, His-51, His-57, and His-71 each coordinate Fe cation. The active site involves Lys-96. Cys-138 (nucleophile) is an active-site residue.

It belongs to the isochorismatase family. As to quaternary structure, monomer. Requires Mn(2+) as cofactor. The cofactor is Fe(2+).

It catalyses the reaction nicotinamide + H2O = nicotinate + NH4(+). The enzyme catalyses pyrazinamide + H2O = pyrazine-2-carboxylate + NH4(+). The protein operates within cofactor biosynthesis; nicotinate biosynthesis; nicotinate from nicotinamide: step 1/1. With respect to regulation, is inhibited by Cu(2+), Zn(2+) and Fe(3+). Its function is as follows. Catalyzes the deamidation of nicotinamide (NAM) into nicotinate. Likely functions in the cyclical salvage pathway for production of NAD from nicotinamide. Is involved in the activation of the first-line antituberculous drug pyrazinamide (PZA) by converting it into the active form, pyrazinoic acid. This chain is Nicotinamidase/pyrazinamidase, found in Mycobacterium tuberculosis (strain ATCC 25618 / H37Rv).